The sequence spans 960 residues: Protein mono-ADP-ribosyltransferase PARP10 (960 aa).

Glutamate 103 is subject to ADP-ribosyl glutamic acid. A compositionally biased stretch (polar residues) spans 325 to 341; sequence SMGSTSPVDPVESSTEL. A disordered region spans residues 325–346; the sequence is SMGSTSPVDPVESSTELPEQVG. Phosphoserine is present on residues serine 381 and serine 388. Residues 553 to 576 are disordered; sequence SPHGGEDRVPLEMEKEKPGGPGET. Residues 555–570 are compositionally biased toward basic and acidic residues; it reads HGGEDRVPLEMEKEKP. Positions 604 to 621 match the Ubiquitin-interacting motif; that stretch reads LEEEATLQLAIHRSLESQ. A Phosphoserine modification is found at serine 617. Positions 649–856 are myc binding; sequence DEDTGGEAQL…CAHGFNRSFC (208 aa). The region spanning 755-960 is the PARP catalytic domain; sequence PNLSEQGLKE…TCKNILPGTP (206 aa). Residues 780–787 carry the PIP-box motif; that stretch reads QDVVRAFY. Glutamate 831 carries the ADP-ribosyl glutamic acid modification.

It belongs to the ARTD/PARP family. Interacts with MYC. Interacts with PARP14. Interacts (via-PIP box and ubiquitin-interacting motifs) with PCNA. In terms of processing, stimulated through its phosphorylation by CDK2. Acquires CDK-dependent phosphorylation through late-G1 to S phase, and from prometaphase to cytokinesis in the nucleolar organizing regions. Phosphorylation is suppressed in growth-arrested cells. Post-translationally, auto-mono-ADP-ribosylated on glutamate and lysine residues.

It is found in the cytoplasm. It localises to the nucleus. It catalyses the reaction L-lysyl-[protein] + NAD(+) = N(6)-(ADP-D-ribosyl)-L-lysyl-[protein] + nicotinamide + H(+). The catalysed reaction is L-aspartyl-[protein] + NAD(+) = 4-O-(ADP-D-ribosyl)-L-aspartyl-[protein] + nicotinamide. It carries out the reaction L-glutamyl-[protein] + NAD(+) = 5-O-(ADP-D-ribosyl)-L-glutamyl-[protein] + nicotinamide. Functionally, ADP-ribosyltransferase that mediates mono-ADP-ribosylation of glutamate and aspartate residues on target proteins. In contrast to PARP1 and PARP2, it is not able to mediate poly-ADP-ribosylation. Catalyzes mono-ADP-ribosylation of GSK3B, leading to negatively regulate GSK3B kinase activity. Involved in translesion DNA synthesis in response to DNA damage via its interaction with PCNA. The sequence is that of Protein mono-ADP-ribosyltransferase PARP10 from Mus musculus (Mouse).